Consider the following 355-residue polypeptide: Chorismate synthase (355 aa).

Arg-48 serves as a coordination point for NADP(+). Residues 125–127 (RSS), 238–239 (NA), Gly-278, 293–297 (KPASS), and Arg-319 contribute to the FMN site.

The protein belongs to the chorismate synthase family. In terms of assembly, homotetramer. It depends on FMNH2 as a cofactor.

The enzyme catalyses 5-O-(1-carboxyvinyl)-3-phosphoshikimate = chorismate + phosphate. It functions in the pathway metabolic intermediate biosynthesis; chorismate biosynthesis; chorismate from D-erythrose 4-phosphate and phosphoenolpyruvate: step 7/7. Its function is as follows. Catalyzes the anti-1,4-elimination of the C-3 phosphate and the C-6 proR hydrogen from 5-enolpyruvylshikimate-3-phosphate (EPSP) to yield chorismate, which is the branch point compound that serves as the starting substrate for the three terminal pathways of aromatic amino acid biosynthesis. This reaction introduces a second double bond into the aromatic ring system. This chain is Chorismate synthase, found in Baumannia cicadellinicola subsp. Homalodisca coagulata.